A 340-amino-acid chain; its full sequence is Citramalyl-CoA lyase, mitochondrial (340 aa).

The transit peptide at 1–22 (MALRLLRRAARGAAAAALLRLK) directs the protein to the mitochondrion. Substrate-binding residues include Tyr50, Lys57, and Lys61. N6-acetyllysine is present on residues Lys57 and Lys61. Lys82 and Lys92 each carry N6-acetyllysine; alternate. Residues Lys82 and Lys92 each carry the N6-succinyllysine; alternate modification. Residue Arg107 coordinates substrate. Residues Glu171 and Asp206 each coordinate Mg(2+). 272-273 (IH) provides a ligand contact to substrate. N6-succinyllysine is present on Lys309. Asp320 is an active-site residue.

It belongs to the HpcH/HpaI aldolase family. Citrate lyase beta subunit-like subfamily. As to quaternary structure, homotrimer. Mg(2+) is required as a cofactor.

It localises to the mitochondrion. It catalyses the reaction glyoxylate + acetyl-CoA + H2O = (S)-malate + CoA + H(+). The catalysed reaction is propanoyl-CoA + glyoxylate + H2O = 3-methylmalate + CoA + H(+). The enzyme catalyses (3S)-citramalyl-CoA = pyruvate + acetyl-CoA. It carries out the reaction (S)-malyl-CoA + H2O = (S)-malate + CoA + H(+). Functionally, mitochondrial citramalyl-CoA lyase indirectly involved in the vitamin B12 metabolism. Converts citramalyl-CoA into acetyl-CoA and pyruvate in the C5-dicarboxylate catabolism pathway. The C5-dicarboxylate catabolism pathway is required to detoxify itaconate, a vitamin B12-poisoning metabolite. Also acts as a malate synthase in vitro, converting glyoxylate and acetyl-CoA to malate. Also displays malyl-CoA thioesterase activity. Also acts as a beta-methylmalate synthase in vitro, by mediating conversion of glyoxylate and propionyl-CoA to beta-methylmalate. Also has very weak citramalate synthase activity in vitro. The protein is Citramalyl-CoA lyase, mitochondrial of Homo sapiens (Human).